We begin with the raw amino-acid sequence, 314 residues long: Ribosomal protein uL3 glutamine methyltransferase (314 aa).

This sequence belongs to the protein N5-glutamine methyltransferase family. PrmB subfamily.

It carries out the reaction L-glutaminyl-[ribosomal protein uL3] + S-adenosyl-L-methionine = N(5)-methyl-L-glutaminyl-[ribosomal protein uL3] + S-adenosyl-L-homocysteine + H(+). In terms of biological role, methylates large ribosomal subunit protein uL3 on a specific glutamine residue. This chain is Ribosomal protein uL3 glutamine methyltransferase, found in Vibrio cholerae serotype O1 (strain ATCC 39315 / El Tor Inaba N16961).